Reading from the N-terminus, the 81-residue chain is D-alanyl carrier protein (81 aa).

The Carrier domain maps to 1-81; the sequence is MADEAIKNGV…KIIAKVEQAQ (81 aa). At serine 39 the chain carries O-(pantetheine 4'-phosphoryl)serine.

This sequence belongs to the DltC family. Post-translationally, 4'-phosphopantetheine is transferred from CoA to a specific serine of apo-DCP.

Its subcellular location is the cytoplasm. Its pathway is cell wall biogenesis; lipoteichoic acid biosynthesis. Functionally, carrier protein involved in the D-alanylation of lipoteichoic acid (LTA). The loading of thioester-linked D-alanine onto DltC is catalyzed by D-alanine--D-alanyl carrier protein ligase DltA. The DltC-carried D-alanyl group is further transferred to cell membrane phosphatidylglycerol (PG) by forming an ester bond, probably catalyzed by DltD. D-alanylation of LTA plays an important role in modulating the properties of the cell wall in Gram-positive bacteria, influencing the net charge of the cell wall. The sequence is that of D-alanyl carrier protein from Lacticaseibacillus rhamnosus (Lactobacillus rhamnosus).